The sequence spans 156 residues: Ribosome maturation factor RimP (156 aa).

Belongs to the RimP family.

The protein localises to the cytoplasm. Functionally, required for maturation of 30S ribosomal subunits. The polypeptide is Ribosome maturation factor RimP (Bacillus mycoides (strain KBAB4) (Bacillus weihenstephanensis)).